A 184-amino-acid polypeptide reads, in one-letter code: Adenine phosphoribosyltransferase (184 aa).

Belongs to the purine/pyrimidine phosphoribosyltransferase family. As to quaternary structure, homodimer.

The protein localises to the cytoplasm. It catalyses the reaction AMP + diphosphate = 5-phospho-alpha-D-ribose 1-diphosphate + adenine. It functions in the pathway purine metabolism; AMP biosynthesis via salvage pathway; AMP from adenine: step 1/1. In terms of biological role, catalyzes a salvage reaction resulting in the formation of AMP, that is energically less costly than de novo synthesis. The polypeptide is Adenine phosphoribosyltransferase (Parafrankia sp. (strain EAN1pec)).